A 187-amino-acid polypeptide reads, in one-letter code: Peptidyl-tRNA hydrolase (187 aa).

F14 serves as a coordination point for tRNA. The Proton acceptor role is filled by H19. Positions 64, 66, and 112 each coordinate tRNA.

This sequence belongs to the PTH family. Monomer.

Its subcellular location is the cytoplasm. It catalyses the reaction an N-acyl-L-alpha-aminoacyl-tRNA + H2O = an N-acyl-L-amino acid + a tRNA + H(+). Its function is as follows. Hydrolyzes ribosome-free peptidyl-tRNAs (with 1 or more amino acids incorporated), which drop off the ribosome during protein synthesis, or as a result of ribosome stalling. In terms of biological role, catalyzes the release of premature peptidyl moieties from peptidyl-tRNA molecules trapped in stalled 50S ribosomal subunits, and thus maintains levels of free tRNAs and 50S ribosomes. In Oceanobacillus iheyensis (strain DSM 14371 / CIP 107618 / JCM 11309 / KCTC 3954 / HTE831), this protein is Peptidyl-tRNA hydrolase.